Reading from the N-terminus, the 182-residue chain is uncharacterized protein (182 aa).

Helical transmembrane passes span I58–Y78 and P81–W101.

It to M.jannaschii MJ0803.

The protein resides in the cell membrane. This is an uncharacterized protein from Methanocaldococcus jannaschii (strain ATCC 43067 / DSM 2661 / JAL-1 / JCM 10045 / NBRC 100440) (Methanococcus jannaschii).